The chain runs to 450 residues: UDP-N-acetylmuramate--L-alanine ligase (450 aa).

112-118 (GTHGKTT) is a binding site for ATP.

The protein belongs to the MurCDEF family.

The protein localises to the cytoplasm. It catalyses the reaction UDP-N-acetyl-alpha-D-muramate + L-alanine + ATP = UDP-N-acetyl-alpha-D-muramoyl-L-alanine + ADP + phosphate + H(+). Its pathway is cell wall biogenesis; peptidoglycan biosynthesis. Functionally, cell wall formation. The sequence is that of UDP-N-acetylmuramate--L-alanine ligase from Endomicrobium trichonymphae.